An 805-amino-acid chain; its full sequence is Phenylalanine--tRNA ligase beta subunit (805 aa).

The region spanning 40 to 162 (FKNPDYLQLG…NRDEFGDYLS (123 aa)) is the tRNA-binding domain. Residues 412 to 486 (AFNRKIYLNF…KILDLNKIKE (75 aa)) enclose the B5 domain. 4 residues coordinate Mg(2+): Asp464, Asp470, Glu473, and Glu474.

This sequence belongs to the phenylalanyl-tRNA synthetase beta subunit family. Type 1 subfamily. In terms of assembly, tetramer of two alpha and two beta subunits. Mg(2+) is required as a cofactor.

Its subcellular location is the cytoplasm. It carries out the reaction tRNA(Phe) + L-phenylalanine + ATP = L-phenylalanyl-tRNA(Phe) + AMP + diphosphate + H(+). The chain is Phenylalanine--tRNA ligase beta subunit (pheT) from Mycoplasma pneumoniae (strain ATCC 29342 / M129 / Subtype 1) (Mycoplasmoides pneumoniae).